A 282-amino-acid polypeptide reads, in one-letter code: ADP-ribosyl cyclase/cyclic ADP-ribose hydrolase (282 aa).

An N-terminal signal peptide occupies residues 1 to 24 (MSPVAIVACVCLAVTLTRISPSEA). 5 disulfides stabilise this stretch: cysteine 39/cysteine 58, cysteine 75/cysteine 155, cysteine 136/cysteine 149, cysteine 230/cysteine 251, and cysteine 263/cysteine 272.

Belongs to the ADP-ribosyl cyclase family. In terms of tissue distribution, ovotestis.

Its subcellular location is the cytoplasmic vesicle. The enzyme catalyses NAD(+) = cyclic ADP-beta-D-ribose + nicotinamide + H(+). It carries out the reaction NAD(+) + H2O = ADP-D-ribose + nicotinamide + H(+). It catalyses the reaction nicotinate + NADP(+) = nicotinate-adenine dinucleotide phosphate + nicotinamide. Activity is presumably regulated by its sequestration in vesicles before egg fertilization. After fertilization and upon NADase release, it could then be regulated via its potential phosphorylation sites. Functionally, synthesizes cyclic ADP-ribose (cADPR), a second messenger for calcium mobilization from endoplasmic reticulum. Might make the Ca(2+) mobilizer nicotinate-adenine dinucleotide phosphate. Does not have cADPR hydrolase activity. The protein is ADP-ribosyl cyclase/cyclic ADP-ribose hydrolase of Aplysia kurodai (Kuroda's sea hare).